The chain runs to 236 residues: Ribose-5-phosphate isomerase A (236 aa).

Residues 32–35 (TGST), 87–90 (DGSD), and 100–103 (KGGG) each bind substrate. The active-site Proton acceptor is the E109. K127 provides a ligand contact to substrate.

Belongs to the ribose 5-phosphate isomerase family. As to quaternary structure, homodimer.

It catalyses the reaction aldehydo-D-ribose 5-phosphate = D-ribulose 5-phosphate. Its pathway is carbohydrate degradation; pentose phosphate pathway; D-ribose 5-phosphate from D-ribulose 5-phosphate (non-oxidative stage): step 1/1. Its function is as follows. Catalyzes the reversible conversion of ribose-5-phosphate to ribulose 5-phosphate. This chain is Ribose-5-phosphate isomerase A, found in Haloquadratum walsbyi (strain DSM 16790 / HBSQ001).